Reading from the N-terminus, the 215-residue chain is Large ribosomal subunit protein uL3 (215 aa).

The tract at residues 136-155 is disordered; sequence GVSISHRSHGSTGQRQDPGK. At glutamine 151 the chain carries N5-methylglutamine.

This sequence belongs to the universal ribosomal protein uL3 family. In terms of assembly, part of the 50S ribosomal subunit. Forms a cluster with proteins L14 and L19. In terms of processing, methylated by PrmB.

Its function is as follows. One of the primary rRNA binding proteins, it binds directly near the 3'-end of the 23S rRNA, where it nucleates assembly of the 50S subunit. This is Large ribosomal subunit protein uL3 from Rickettsia canadensis (strain McKiel).